The chain runs to 127 residues: MSIPKDLRYSGEHEWVKVEGEKARIGITHFAQSELGDIVFVELPEVGAEIKADEPFGSVESVKTVSELYAPINGTVVEVNEDLDDSPEFVNESPYEKAWMIVVEPSDASEIEKLMTAEQYEEMTQED.

In terms of domain architecture, Lipoyl-binding spans 22–104 (KARIGITHFA…YEKAWMIVVE (83 aa)). An N6-lipoyllysine modification is found at lysine 63.

This sequence belongs to the GcvH family. As to quaternary structure, the glycine cleavage system is composed of four proteins: P, T, L and H. The cofactor is (R)-lipoate.

Its function is as follows. The glycine cleavage system catalyzes the degradation of glycine. The H protein shuttles the methylamine group of glycine from the P protein to the T protein. Is also involved in protein lipoylation via its role as an octanoyl/lipoyl carrier protein intermediate. This is Glycine cleavage system H protein from Bacillus subtilis (strain 168).